Reading from the N-terminus, the 1431-residue chain is Trophinin (1431 aa).

3 disordered regions span residues 1–24 (MDRR…PGSL), 341–365 (SRAR…QGAQ), and 401–433 (PTTR…PWGR). Positions 405–415 (TRGKRNRKSKH) are enriched in basic residues. The MAGE domain occupies 444–642 (LQERANKLVK…KDWAVQYREA (199 aa)). A run of 2 repeats spans residues 751 to 760 (FSGGPGITFG) and 769 to 778 (FSNTASISFG). The interval 751–1430 (FSGGPGITFG…ASLGACGFSY (680 aa)) is 62 X 10 AA approximate tandem repeats. Residues 779–786 (GTLSTSSS) form a 3; approximate repeat. A run of 2 repeats spans residues 787–796 (FSSAASISFG) and 805–814 (FSSEASISFG). The stretch at 823–833 (FSGGVSSSFSG) is one 6; approximate repeat. Residues 841-850 (FSGGASSGFG) form repeat 7. Residues 859–870 (FSGVLSTSTSFG) form an 8; approximate repeat. One copy of the 9; approximate repeat lies at 879 to 890 (FSSALSTSTGFG). Repeat copies occupy residues 901 to 910 (GSPSSSGSFG), 911 to 920 (GTLSTSICFG), 921 to 930 (GSPCTSTGFG), 931 to 940 (GTLSTSVSFG), and 941 to 950 (GSSSTSANFG). Residues 951–960 (GTLSTSICFD) form a 15; approximate repeat. 6 tandem repeats follow at residues 961–970 (GSPSTGAGFG), 971–980 (GALNTSASFG), 981–990 (SVLNTSTGFG), 991–1000 (GAMSTSADFG), 1001–1010 (GTLSTSVCFG), and 1011–1020 (GSPGTSVSFG). The stretch at 1021 to 1030 (SALNTNAGYG) is one 22; approximate repeat. Tandem repeats lie at residues 1031-1040 (GAVSTNTDFG), 1041-1050 (GTLSTSVCFG), 1051-1060 (GSPSTSAGFG), and 1061-1070 (GALNTNASFG). One copy of the 27; approximate repeat lies at 1071–1080 (CAVSTSASFS). A 28; approximate repeat occupies 1081 to 1090 (GAVSTSACFS). 8 tandem repeats follow at residues 1091–1100 (GAPITNPGFG), 1101–1110 (GAFSTSAGFG), 1111–1120 (GALSTAADFG), 1121–1130 (GTPSNSIGFG), 1131–1140 (AAPSTSVSFG), 1141–1150 (GAHGTSLCFG), 1151–1160 (GAPSTSLCFG), and 1161–1170 (SASNTNLCFG). One copy of the 37; approximate repeat lies at 1171–1180 (GPPSTSACFS). One copy of the 38; approximate repeat lies at 1181-1190 (GATSPSFCDG). 3 repeat units span residues 1191-1200 (PSTSTGFSFG), 1201-1210 (NGLSTNAGFG), and 1211-1220 (GGLNTSAGFG). The stretch at 1221 to 1230 (GGLGTSAGFS) is one 42; approximate repeat. One copy of the 43; approximate repeat lies at 1231 to 1240 (GGLSTSSGFD). 2 consecutive repeat copies span residues 1241–1250 (GGLGTSAGFG) and 1251–1260 (GGPGTSTGFG). The stretch at 1261–1270 (GGLGTSAGFS) is one 46; approximate repeat. 3 tandem repeats follow at residues 1271-1280 (GGLGTSAGFG), 1281-1290 (GGLVTSDGFG), and 1291-1300 (GGLGTNASFG). Residues 1301–1310 (STLGTSAGFS) form a 50; approximate repeat. Repeat unit 51 spans residues 1311–1320 (GGLSTSDGFG). The 52; approximate repeat unit spans residues 1321–1330 (SRPNASFDRG). One copy of the 53; approximate repeat lies at 1331 to 1340 (LSTIIGFGSG). One copy of the 54; approximate repeat lies at 1341–1350 (SNTSTGFTGE). Low complexity predominate over residues 1342–1363 (NTSTGFTGEPSTSTGFSSGPSS). Residues 1342–1365 (NTSTGFTGEPSTSTGFSSGPSSIV) form a disordered region. One copy of the 55; approximate repeat lies at 1351 to 1360 (PSTSTGFSSG). The stretch at 1361–1370 (PSSIVGFSGG) is one 56; approximate repeat. One copy of the 57; approximate repeat lies at 1371 to 1380 (PSTGVGFCSG). A 58; approximate repeat occupies 1381–1390 (PSTSGFSGGP). Residues 1391–1400 (STGAGFGGGP) form a 59; approximate repeat. Residues 1401-1410 (NTGAGFGGGP) form a 60; approximate repeat. The 61; approximate repeat unit spans residues 1411–1420 (STSAGFGSGA). A 62; approximate repeat occupies 1421-1430 (ASLGACGFSY).

Directly binds bystin, and indirectly tastin. As to expression, strong expression at implantation sites. Found in the placenta from the sixth week of pregnancy. Was localized in the cytoplasm of the syncytiotrophoblast in the chorionic villi and in endometrial decidual cells at the uteroplacental interface. After week 10, the level decreased and then disappeared from placental villi. Also found in macrophages.

In terms of biological role, could be involved with bystin and tastin in a cell adhesion molecule complex that mediates an initial attachment of the blastocyst to uterine epithelial cells at the time of the embryo implantation. Directly responsible for homophilic cell adhesion. The protein is Trophinin (TRO) of Homo sapiens (Human).